Reading from the N-terminus, the 266-residue chain is Trypsin Blo t 3 (266 aa).

The N-terminal stretch at 1–15 (MKVLVLFCLVSLAAA) is a signal peptide. The propeptide occupies 16–35 (GPLKDALNKAQVDAFYAEGY). The Peptidase S1 domain occupies 36 to 260 (IVDGSNAADG…RVGNYISWIK (225 aa)). Cysteine 60 and cysteine 76 are joined by a disulfide. Active-site charge relay system residues include histidine 75 and aspartate 120. 2 disulfide bridges follow: cysteine 187–cysteine 204 and cysteine 216–cysteine 240. The active-site Charge relay system is serine 220.

It belongs to the peptidase S1 family.

The protein resides in the secreted. It carries out the reaction Preferential cleavage: Arg-|-Xaa, Lys-|-Xaa.. This is Trypsin Blo t 3 from Blomia tropicalis (Mite).